We begin with the raw amino-acid sequence, 151 residues long: Transcriptional regulator MraZ (151 aa).

SpoVT-AbrB domains lie at 5–52 (ANAI…PLSE) and 81–124 (AVDL…DEDA).

The protein belongs to the MraZ family. As to quaternary structure, forms oligomers.

It is found in the cytoplasm. Its subcellular location is the nucleoid. This is Transcriptional regulator MraZ from Pseudomonas savastanoi pv. phaseolicola (strain 1448A / Race 6) (Pseudomonas syringae pv. phaseolicola (strain 1448A / Race 6)).